Consider the following 655-residue polypeptide: Putative calcium up-regulated protein J (655 aa).

Positions 40–181 (KSRAMLKGDN…DNVCFQWDLE (142 aa)) constitute a Ricin B-type lectin domain.

The protein belongs to the cup family.

This Dictyostelium discoideum (Social amoeba) protein is Putative calcium up-regulated protein J (cupJ).